The primary structure comprises 393 residues: Exosome complex component RRP45 (393 aa).

The tract at residues 1–268 (MRDTPLSNCE…SEITELINKA (268 aa)) is ARE binding.

Belongs to the RNase PH family. Component of the RNA exosome complex.

It is found in the cytoplasm. The protein localises to the nucleus. Its subcellular location is the nucleolus. It localises to the nucleoplasm. In terms of biological role, non-catalytic component of the RNA exosome complex which has 3'-&gt;5' exoribonuclease activity and participates in a multitude of cellular RNA processing and degradation events. In the nucleus, the RNA exosome complex is involved in proper maturation of stable RNA species such as rRNA, snRNA and snoRNA, in the elimination of RNA processing by-products and non-coding 'pervasive' transcripts, such as antisense RNA species and promoter-upstream transcripts (PROMPTs), and of mRNAs with processing defects, thereby limiting or excluding their export to the cytoplasm. In the cytoplasm, the RNA exosome complex is involved in general mRNA turnover and specifically degrades inherently unstable mRNAs containing AU-rich elements (AREs) within their 3' untranslated regions, and in RNA surveillance pathways, preventing translation of aberrant mRNAs. This is Exosome complex component RRP45 from Danio rerio (Zebrafish).